Here is a 75-residue protein sequence, read N- to C-terminus: Small ribosomal subunit protein bS18 (75 aa).

This sequence belongs to the bacterial ribosomal protein bS18 family. Part of the 30S ribosomal subunit. Forms a tight heterodimer with protein bS6.

Its function is as follows. Binds as a heterodimer with protein bS6 to the central domain of the 16S rRNA, where it helps stabilize the platform of the 30S subunit. This chain is Small ribosomal subunit protein bS18, found in Vibrio atlanticus (strain LGP32) (Vibrio splendidus (strain Mel32)).